The sequence spans 550 residues: Dihydroxy-acid dehydratase (550 aa).

Residue D78 coordinates Mg(2+). C119 serves as a coordination point for [2Fe-2S] cluster. Residues D120 and K121 each coordinate Mg(2+). N6-carboxylysine is present on K121. C192 provides a ligand contact to [2Fe-2S] cluster. E440 lines the Mg(2+) pocket. The Proton acceptor role is filled by S466.

The protein belongs to the IlvD/Edd family. Homodimer. Requires [2Fe-2S] cluster as cofactor. Mg(2+) is required as a cofactor.

The enzyme catalyses (2R)-2,3-dihydroxy-3-methylbutanoate = 3-methyl-2-oxobutanoate + H2O. It carries out the reaction (2R,3R)-2,3-dihydroxy-3-methylpentanoate = (S)-3-methyl-2-oxopentanoate + H2O. The protein operates within amino-acid biosynthesis; L-isoleucine biosynthesis; L-isoleucine from 2-oxobutanoate: step 3/4. It participates in amino-acid biosynthesis; L-valine biosynthesis; L-valine from pyruvate: step 3/4. In terms of biological role, functions in the biosynthesis of branched-chain amino acids. Catalyzes the dehydration of (2R,3R)-2,3-dihydroxy-3-methylpentanoate (2,3-dihydroxy-3-methylvalerate) into 2-oxo-3-methylpentanoate (2-oxo-3-methylvalerate) and of (2R)-2,3-dihydroxy-3-methylbutanoate (2,3-dihydroxyisovalerate) into 2-oxo-3-methylbutanoate (2-oxoisovalerate), the penultimate precursor to L-isoleucine and L-valine, respectively. The polypeptide is Dihydroxy-acid dehydratase (Thermodesulfovibrio yellowstonii (strain ATCC 51303 / DSM 11347 / YP87)).